Consider the following 365-residue polypeptide: 3-dehydroquinate synthase (365 aa).

NAD(+)-binding positions include 106–110 (GVIGD), 130–131 (TT), Lys-142, Lys-151, and 169–172 (FFAT). Zn(2+) contacts are provided by Glu-184, His-247, and His-264.

It belongs to the sugar phosphate cyclases superfamily. Dehydroquinate synthase family. Co(2+) serves as cofactor. Zn(2+) is required as a cofactor. It depends on NAD(+) as a cofactor.

The protein localises to the cytoplasm. The enzyme catalyses 7-phospho-2-dehydro-3-deoxy-D-arabino-heptonate = 3-dehydroquinate + phosphate. It functions in the pathway metabolic intermediate biosynthesis; chorismate biosynthesis; chorismate from D-erythrose 4-phosphate and phosphoenolpyruvate: step 2/7. In terms of biological role, catalyzes the conversion of 3-deoxy-D-arabino-heptulosonate 7-phosphate (DAHP) to dehydroquinate (DHQ). This chain is 3-dehydroquinate synthase, found in Listeria welshimeri serovar 6b (strain ATCC 35897 / DSM 20650 / CCUG 15529 / CIP 8149 / NCTC 11857 / SLCC 5334 / V8).